Reading from the N-terminus, the 337-residue chain is Fructose-1,6-bisphosphatase class 1 (337 aa).

Residues Glu-94, Asp-116, Leu-118, and Asp-119 each contribute to the Mg(2+) site. Substrate is bound by residues 119-122 (DGSS), Asn-210, and Lys-276. Glu-282 provides a ligand contact to Mg(2+).

It belongs to the FBPase class 1 family. As to quaternary structure, homotetramer. Requires Mg(2+) as cofactor.

The protein localises to the cytoplasm. The enzyme catalyses beta-D-fructose 1,6-bisphosphate + H2O = beta-D-fructose 6-phosphate + phosphate. Its pathway is carbohydrate biosynthesis; gluconeogenesis. This chain is Fructose-1,6-bisphosphatase class 1, found in Burkholderia cenocepacia (strain HI2424).